A 375-amino-acid chain; its full sequence is Trans-enoyl reductase BOA5 (375 aa).

Polar residues predominate over residues 1–16; sequence MQAVIQTGPGTLQLTE. A disordered region spans residues 1–21; that stretch reads MQAVIQTGPGTLQLTENVPKP. 42–45 serves as a coordination point for NADP(+); sequence SDWK. Residue 121-128 coordinates substrate; sequence VGIVTTGL. Residues 147 to 168 form a disordered region; that stretch reads GSAAPQKTRVGPRGWSGGDALT. NADP(+) contacts are provided by residues 185-188, 208-211, Tyr226, and 273-274; these read STST, SPHN, and LD. Residue 294-298 participates in substrate binding; sequence ALTIF. 363–364 contributes to the NADP(+) binding site; that stretch reads VS.

This sequence belongs to the zinc-containing alcohol dehydrogenase family. In terms of assembly, monomer.

The protein operates within polyketide biosynthesis. In terms of biological role, trans-enoyl reductase; part of the gene cluster A that mediates the biosynthesis of botcinic acid and its botcinin derivatives, acetate-derived polyketides that contribute to virulence when combined with the sesquiterpene botrydial. Botcinic acid and its derivatives have been shown to induce chlorosis and necrosis during host plant infection, but also have antifungal activities. Two polyketide synthases, BOA6 and BOA9, are involved in the biosynthesis of botcinins. BOA6 mediates the formation of the per-methylated tetraketide core by condensation of four units of malonyl-CoA with one unit of acetyl-CoA, which would be methylated in activated methylene groups to yield a bicyclic acid intermediate that could then either be converted to botrylactone derivatives or lose the starter acetate unit through a retro-Claisen type C-C bond cleavage to yield botcinin derivatives. The second polyketide synthase, BOA9, is probably required for the biosynthesis of the tetraketide side chain of botcinins. The methyltransferase (MT) domain within BOA6 is probably responsible for the incorporation of four methyl groups. The trans-enoyl reductase BOA5 might take over the enoyl reductase function of BOA6 that misses an ER domain. The monooxygenases BOA2, BOA3 and BOA4 might be involved in further hydroxylations at C4, C5 and C8, whereas BOA7, close to BOA9, could potentially be involved in the hydroxylation at C4 in the side chain of botcinins. The chain is Trans-enoyl reductase BOA5 from Botryotinia fuckeliana (strain B05.10) (Noble rot fungus).